The chain runs to 79 residues: DNA gyrase inhibitor YacG (79 aa).

Zn(2+)-binding residues include C7, C10, C26, and C30.

This sequence belongs to the DNA gyrase inhibitor YacG family. Interacts with GyrB. Requires Zn(2+) as cofactor.

In terms of biological role, inhibits all the catalytic activities of DNA gyrase by preventing its interaction with DNA. Acts by binding directly to the C-terminal domain of GyrB, which probably disrupts DNA binding by the gyrase. The chain is DNA gyrase inhibitor YacG from Shewanella halifaxensis (strain HAW-EB4).